The following is a 495-amino-acid chain: Cytochrome P450 monooxygenase FrzC (495 aa).

A helical membrane pass occupies residues 8-28 (GLVVGLWVTYHILLGTYNVFF). Cys-437 contributes to the heme binding site.

It belongs to the cytochrome P450 family. It depends on heme as a cofactor.

It localises to the membrane. It carries out the reaction (S,S)-2,5-di-(p-hydroxybenzyl)piperazine + reduced [NADPH--hemoprotein reductase] + O2 = (1S,4S)-4-[(4-hydroxyphenyl)methyl]-2,5-diazaspiro[bicyclo[3.2.1]octane-6,1'-cyclohexane]-2',5'-dien-4'-one + oxidized [NADPH--hemoprotein reductase] + 2 H2O + H(+). It functions in the pathway secondary metabolite biosynthesis. In terms of biological role, cytochrome P450 monooxygenase; part of the gene cluster that mediates the biosynthesis of the alkaloid (-)-FR901483, a potent immunosuppressant that shows efficacy in animal models and a probable inhibitor of purine nucleotide biosynthesis by targeting phosphoribosylpyrophosphate amidotransferase (PPAT). Within the pathway, FrzC catalyzes the coupling between N10 and C1' to produce a 1,4-diazabicyclo[3.2.1]octane spiro-fused to a 2,5-cyclohexadienone. FrzC probably first catalyzes homolysis of the N-H bond to generate the N10 radical which is followed by an O-H abstraction to give the phenolic radical which can be delocalized to C1'. Radical coupling between N10 and C1' then forms. The biosynthesis of (-)-FR901483 starts with the condensation of two L-tyrosines to yield (S,S)-dityrosyl-piperazine. This process occurs in 3 steps with the non-canonical nonribosomal peptide synthetase FrzA catalyzing the reduction of L-tyrosine into L-tyrosinal, the spontaneous condensation of 2 L-tyrosinal units, and the subsequent reduction by the NmrA-like family domain-containing oxidoreductase FrzB. The cytochrome P450 monooxygenase FrzC then performs coupling between N10 and C1' to morph the piperazine into a 1,4-diazabicyclo[3.2.1]octane spiro-fused to a 2,5-cyclohexadienone. The dienone portion is further reduced to cyclohexanone by the flavin-dependent reductase FrzD. The methyltranserases (MTs) FrzE and FrzF are then involved in the methylation at the C10' amine and the C4 phenolic oxygen, respectively. The order of the two MTs appear to be interchangeable. Cleavage of the C9-N10' bond by the dioxygenase FrzG then leads to formation of a conjugated iminium. In addition to the oxidation of C9, an additional dehydrogenation between C7 and C8 can occur to give a likely shunt product. The next biosynthetic step is the intramolecular aldol condensation catalyzed by the newly identified aldolase FrzH to yield an aza-tricyclic product with the formation of a C9-C3' bond. The short-chain dehydrogenase/reductase FrzI then produces dephospho-(-)-FR901483 that is phosphorylated at C4'-OH into (-)-FR901483 by the phosphotransferase FrzJ. This Cladobotryum sp protein is Cytochrome P450 monooxygenase FrzC.